The chain runs to 679 residues: Glycine--tRNA ligase beta subunit (679 aa).

This sequence belongs to the class-II aminoacyl-tRNA synthetase family. Tetramer of two alpha and two beta subunits.

The protein resides in the cytoplasm. The enzyme catalyses tRNA(Gly) + glycine + ATP = glycyl-tRNA(Gly) + AMP + diphosphate. The protein is Glycine--tRNA ligase beta subunit of Streptococcus pyogenes serotype M2 (strain MGAS10270).